Here is a 339-residue protein sequence, read N- to C-terminus: Phenylalanine--tRNA ligase alpha subunit (339 aa).

Mg(2+) is bound at residue E254.

Belongs to the class-II aminoacyl-tRNA synthetase family. Phe-tRNA synthetase alpha subunit type 1 subfamily. In terms of assembly, tetramer of two alpha and two beta subunits. Mg(2+) is required as a cofactor.

The protein resides in the cytoplasm. It carries out the reaction tRNA(Phe) + L-phenylalanine + ATP = L-phenylalanyl-tRNA(Phe) + AMP + diphosphate + H(+). This chain is Phenylalanine--tRNA ligase alpha subunit, found in Dictyoglomus thermophilum (strain ATCC 35947 / DSM 3960 / H-6-12).